Consider the following 460-residue polypeptide: Cysteine--tRNA ligase (460 aa).

A Zn(2+)-binding site is contributed by cysteine 28. Residues methionine 30–histidine 40 carry the 'HIGH' region motif. Zn(2+) contacts are provided by cysteine 209, histidine 234, and glutamate 238. Positions lysine 266 to serine 270 match the 'KMSKS' region motif. Residue lysine 269 participates in ATP binding.

The protein belongs to the class-I aminoacyl-tRNA synthetase family. Monomer. Requires Zn(2+) as cofactor.

Its subcellular location is the cytoplasm. It carries out the reaction tRNA(Cys) + L-cysteine + ATP = L-cysteinyl-tRNA(Cys) + AMP + diphosphate. The chain is Cysteine--tRNA ligase from Pseudomonas entomophila (strain L48).